Reading from the N-terminus, the 87-residue chain is UPF0175 protein AF_0597 (87 aa).

It belongs to the UPF0175 family.

The chain is UPF0175 protein AF_0597 from Archaeoglobus fulgidus (strain ATCC 49558 / DSM 4304 / JCM 9628 / NBRC 100126 / VC-16).